We begin with the raw amino-acid sequence, 1257 residues long: uncharacterized protein (1257 aa).

Residues 1 to 26 (MNFSNKPNKSRKKSNRKNKKSNKSNT) form a disordered region. Residues 8–22 (NKSRKKSNRKNKKSN) are compositionally biased toward basic residues.

It localises to the virion. This is an uncharacterized protein from Acanthamoeba polyphaga mimivirus (APMV).